Consider the following 552-residue polypeptide: Phosphoribosylaminoimidazole carboxylase (552 aa).

The region spanning 108–295 (KQHLQVFKIA…QFEAHLRAIC (188 aa)) is the ATP-grasp domain. Residue 134–189 (GQEFGYPFVLKSKTLAYDGRGNYVVHQPSEIPTAIKALGDRPLYVEKFVPFSMEIA) coordinates ATP.

It in the C-terminal section; belongs to the AIR carboxylase family. Class I subfamily.

The enzyme catalyses 5-amino-1-(5-phospho-D-ribosyl)imidazole-4-carboxylate + H(+) = 5-amino-1-(5-phospho-beta-D-ribosyl)imidazole + CO2. It participates in purine metabolism; IMP biosynthesis via de novo pathway; 5-amino-1-(5-phospho-D-ribosyl)imidazole-4-carboxylate from 5-amino-1-(5-phospho-D-ribosyl)imidazole (carboxylase route): step 1/1. The sequence is that of Phosphoribosylaminoimidazole carboxylase (ade6) from Schizosaccharomyces pombe (strain 972 / ATCC 24843) (Fission yeast).